A 289-amino-acid chain; its full sequence is Cell division protein ZipA (289 aa).

Met-1 is a topological domain (periplasmic). A helical membrane pass occupies residues 2–22 (DIGLREWLIVIGLIVIAGILF). Over 23–289 (DGWRRMRGGK…HERRSLMQKR (267 aa)) the chain is Cytoplasmic. The interval 65–141 (HREPSFDEQD…KEREKAPAVA (77 aa)) is disordered. Basic and acidic residues predominate over residues 81–99 (RETKERKGGKRQEEPRQGD). The segment covering 100–114 (LDLDEGLALEADPSD) has biased composition (acidic residues).

It belongs to the ZipA family. As to quaternary structure, interacts with FtsZ via their C-terminal domains.

It localises to the cell inner membrane. Essential cell division protein that stabilizes the FtsZ protofilaments by cross-linking them and that serves as a cytoplasmic membrane anchor for the Z ring. Also required for the recruitment to the septal ring of downstream cell division proteins. The polypeptide is Cell division protein ZipA (Pseudomonas aeruginosa (strain UCBPP-PA14)).